The chain runs to 157 residues: Ribosomal RNA large subunit methyltransferase H (157 aa).

Residues Leu-74, Gly-106, and 125–130 (LSDMTL) contribute to the S-adenosyl-L-methionine site.

The protein belongs to the RNA methyltransferase RlmH family. As to quaternary structure, homodimer.

Its subcellular location is the cytoplasm. It catalyses the reaction pseudouridine(1915) in 23S rRNA + S-adenosyl-L-methionine = N(3)-methylpseudouridine(1915) in 23S rRNA + S-adenosyl-L-homocysteine + H(+). In terms of biological role, specifically methylates the pseudouridine at position 1915 (m3Psi1915) in 23S rRNA. This chain is Ribosomal RNA large subunit methyltransferase H, found in Desulfovibrio desulfuricans (strain ATCC 27774 / DSM 6949 / MB).